A 379-amino-acid polypeptide reads, in one-letter code: Chaperone protein DnaJ (379 aa).

A J domain is found at 5–69 (EFYDRLGVSK…QKRAAYDQYG (65 aa)). A CR-type zinc finger spans residues 135–217 (GAEKEVSYNR…CHGTGHEKKT (83 aa)). Zn(2+) is bound by residues Cys-148, Cys-151, Cys-165, Cys-168, Cys-191, Cys-194, Cys-205, and Cys-208. CXXCXGXG motif repeat units lie at residues 148-155 (CHTCSGSG), 165-172 (CQKCHGSG), 191-198 (CDVCQGSG), and 205-212 (CPTCHGTG).

The protein belongs to the DnaJ family. Homodimer. It depends on Zn(2+) as a cofactor.

It localises to the cytoplasm. Participates actively in the response to hyperosmotic and heat shock by preventing the aggregation of stress-denatured proteins and by disaggregating proteins, also in an autonomous, DnaK-independent fashion. Unfolded proteins bind initially to DnaJ; upon interaction with the DnaJ-bound protein, DnaK hydrolyzes its bound ATP, resulting in the formation of a stable complex. GrpE releases ADP from DnaK; ATP binding to DnaK triggers the release of the substrate protein, thus completing the reaction cycle. Several rounds of ATP-dependent interactions between DnaJ, DnaK and GrpE are required for fully efficient folding. Also involved, together with DnaK and GrpE, in the DNA replication of plasmids through activation of initiation proteins. This is Chaperone protein DnaJ from Streptococcus agalactiae serotype III (strain NEM316).